A 144-amino-acid chain; its full sequence is Complexin-1 (144 aa).

Over residues 1–10 the composition is skewed to gly residues; it reads MVSFLGGGLL. The disordered stretch occupies residues 1–119; that stretch reads MVSFLGGGLL…SGFPKNLDDL (119 aa). Composition is skewed to basic and acidic residues over residues 18–27 and 36–86; these read LEEKEDKKEG and AEAK…EGRL. Positions 29-67 form a coiled coil; the sequence is EEEDPEIAEAKREAEEKRNEKYRKMEEEREVMRQGIRDK. Residues 103–112 show a composition bias toward polar residues; it reads LQSSAQSSGF. The residue at position 141 (Cys-141) is a Cysteine methyl ester. A lipid anchor (S-farnesyl cysteine) is attached at Cys-141. A propeptide spans 142-144 (removed in mature form); the sequence is NLQ.

It belongs to the complexin/synaphin family. Binds to the SNARE core complex containing SNAP25, synaptobrevin and syntaxin-1. Expressed in a subset of neurons in the central nervous system, including large serotoninergic Retzius neurons and pressure-sensitive P cells.

Its subcellular location is the membrane. In terms of biological role, positively regulates a late step in synaptic vesicle exocytosis. The polypeptide is Complexin-1 (cpx1) (Hirudo medicinalis (Medicinal leech)).